The sequence spans 392 residues: Alanine racemase 2 (392 aa).

Lys40 functions as the Proton acceptor; specific for D-alanine in the catalytic mechanism. The residue at position 40 (Lys40) is an N6-(pyridoxal phosphate)lysine. Arg138 lines the substrate pocket. Residue Tyr266 is the Proton acceptor; specific for L-alanine of the active site. Met314 lines the substrate pocket.

This sequence belongs to the alanine racemase family. The cofactor is pyridoxal 5'-phosphate.

The catalysed reaction is L-alanine = D-alanine. The protein operates within amino-acid biosynthesis; D-alanine biosynthesis; D-alanine from L-alanine: step 1/1. Catalyzes the interconversion of L-alanine and D-alanine. May also act on other amino acids. In Oceanobacillus iheyensis (strain DSM 14371 / CIP 107618 / JCM 11309 / KCTC 3954 / HTE831), this protein is Alanine racemase 2 (alr2).